The following is a 439-amino-acid chain: Taxadien-5-alpha-ol O-acetyltransferase (439 aa).

Catalysis depends on proton acceptor residues H164 and D373.

This sequence belongs to the plant acyltransferase family.

It catalyses the reaction taxa-4(20),11-dien-5alpha-ol + acetyl-CoA = taxa-4(20),11-dien-5alpha-yl acetate + CoA. The protein operates within alkaloid biosynthesis; taxol biosynthesis; 10-deacetyl-2-debenzoylbaccatin III from taxa-4(20),11-dien-5alpha-ol: step 1/3. This is Taxadien-5-alpha-ol O-acetyltransferase (TAT) from Taxus cuspidata (Japanese yew).